The sequence spans 390 residues: Mannitol-1-phosphate 5-dehydrogenase (390 aa).

7 to 18 (AVHFGGGNIGRG) lines the NAD(+) pocket. Residue Lys216 is part of the active site.

The protein belongs to the mannitol dehydrogenase family. Monomer.

It catalyses the reaction D-mannitol 1-phosphate + NAD(+) = beta-D-fructose 6-phosphate + NADH + H(+). Functionally, catalyzes the NAD(H)-dependent interconversion of D-fructose 6-phosphate and D-mannitol 1-phosphate in the mannitol metabolic pathway. Required for the process of sporulation on senescing leaf material. The polypeptide is Mannitol-1-phosphate 5-dehydrogenase (mpd1) (Phaeosphaeria nodorum (strain SN15 / ATCC MYA-4574 / FGSC 10173) (Glume blotch fungus)).